We begin with the raw amino-acid sequence, 191 residues long: Thymidylate kinase (191 aa).

Gly7 to Ser14 is an ATP binding site.

The protein belongs to the thymidylate kinase family.

It catalyses the reaction dTMP + ATP = dTDP + ADP. In terms of biological role, phosphorylation of dTMP to form dTDP in both de novo and salvage pathways of dTTP synthesis. The chain is Thymidylate kinase (tmk) from Helicobacter pylori (strain ATCC 700392 / 26695) (Campylobacter pylori).